Consider the following 420-residue polypeptide: UDP-N-acetylglucosamine 1-carboxyvinyltransferase (420 aa).

Phosphoenolpyruvate is bound at residue 22–23 (KN). Residue Arg-93 coordinates UDP-N-acetyl-alpha-D-glucosamine. Catalysis depends on Cys-117, which acts as the Proton donor. Cys-117 carries the 2-(S-cysteinyl)pyruvic acid O-phosphothioketal modification. Asp-307 and Ile-329 together coordinate UDP-N-acetyl-alpha-D-glucosamine.

Belongs to the EPSP synthase family. MurA subfamily.

It is found in the cytoplasm. The catalysed reaction is phosphoenolpyruvate + UDP-N-acetyl-alpha-D-glucosamine = UDP-N-acetyl-3-O-(1-carboxyvinyl)-alpha-D-glucosamine + phosphate. The protein operates within cell wall biogenesis; peptidoglycan biosynthesis. Its function is as follows. Cell wall formation. Adds enolpyruvyl to UDP-N-acetylglucosamine. The sequence is that of UDP-N-acetylglucosamine 1-carboxyvinyltransferase from Saccharophagus degradans (strain 2-40 / ATCC 43961 / DSM 17024).